The following is a 197-amino-acid chain: Small ribosomal subunit protein eS1 (197 aa).

It belongs to the eukaryotic ribosomal protein eS1 family.

This Methanoculleus marisnigri (strain ATCC 35101 / DSM 1498 / JR1) protein is Small ribosomal subunit protein eS1.